We begin with the raw amino-acid sequence, 392 residues long: MAESQIQSYTINFGPQHPAAHGVLRLILEMSGEVVDRADPHVGLLHRGTEKLIEHKTYLQATPYFDRLDYVGTMNQEHAFVLATEKLLGIDIPIRAKFIRTLYDEIGRILNHLLNVTAFIFDVGGMTPLLYGFEEREKLMEFYERVCGARLHANYYRPGGVAADLPAGLLEDIAAWCETFPKVLDDIETLATDNRIFKQRVVDIGVVSPEQALDWGFTGPNLRASGIAWDLRKSQPYDVYDQMEFDIPVGKNGDGYDRYLVRVLEMRESVKIMKQCIAKMPGGPVRVEDNKITPPKRSEMKTSMESLIHHFKLFTEGFKVPAGEVYGAIEAPKGEFAVYLVSDGTGKPYRCKIRPPGYVHLQALDMMSKGHMLADVVANIGSIDIVFGEIDR.

This sequence belongs to the complex I 49 kDa subunit family. As to quaternary structure, NDH-1 is composed of 14 different subunits. Subunits NuoB, C, D, E, F, and G constitute the peripheral sector of the complex.

The protein resides in the cell inner membrane. It catalyses the reaction a quinone + NADH + 5 H(+)(in) = a quinol + NAD(+) + 4 H(+)(out). NDH-1 shuttles electrons from NADH, via FMN and iron-sulfur (Fe-S) centers, to quinones in the respiratory chain. The immediate electron acceptor for the enzyme in this species is believed to be ubiquinone. Couples the redox reaction to proton translocation (for every two electrons transferred, four hydrogen ions are translocated across the cytoplasmic membrane), and thus conserves the redox energy in a proton gradient. The chain is NADH-quinone oxidoreductase subunit D from Paramagnetospirillum magneticum (strain ATCC 700264 / AMB-1) (Magnetospirillum magneticum).